A 334-amino-acid polypeptide reads, in one-letter code: Biotin synthase (334 aa).

The Radical SAM core domain occupies 41–260; it reads TRLETASLLS…IAVARIMMPR (220 aa). [4Fe-4S] cluster contacts are provided by cysteine 56, cysteine 60, and cysteine 63. The [2Fe-2S] cluster site is built by cysteine 100, cysteine 131, cysteine 191, and arginine 264.

This sequence belongs to the radical SAM superfamily. Biotin synthase family. In terms of assembly, homodimer. The cofactor is [4Fe-4S] cluster. [2Fe-2S] cluster serves as cofactor.

It carries out the reaction (4R,5S)-dethiobiotin + (sulfur carrier)-SH + 2 reduced [2Fe-2S]-[ferredoxin] + 2 S-adenosyl-L-methionine = (sulfur carrier)-H + biotin + 2 5'-deoxyadenosine + 2 L-methionine + 2 oxidized [2Fe-2S]-[ferredoxin]. It participates in cofactor biosynthesis; biotin biosynthesis; biotin from 7,8-diaminononanoate: step 2/2. In terms of biological role, catalyzes the conversion of dethiobiotin (DTB) to biotin by the insertion of a sulfur atom into dethiobiotin via a radical-based mechanism. This chain is Biotin synthase, found in Bradyrhizobium sp. (strain ORS 278).